Consider the following 284-residue polypeptide: Bifunctional protein FolD (284 aa).

NADP(+) contacts are provided by residues 166-168 (GAS) and I232.

Belongs to the tetrahydrofolate dehydrogenase/cyclohydrolase family. Homodimer.

The enzyme catalyses (6R)-5,10-methylene-5,6,7,8-tetrahydrofolate + NADP(+) = (6R)-5,10-methenyltetrahydrofolate + NADPH. It catalyses the reaction (6R)-5,10-methenyltetrahydrofolate + H2O = (6R)-10-formyltetrahydrofolate + H(+). Its pathway is one-carbon metabolism; tetrahydrofolate interconversion. Its function is as follows. Catalyzes the oxidation of 5,10-methylenetetrahydrofolate to 5,10-methenyltetrahydrofolate and then the hydrolysis of 5,10-methenyltetrahydrofolate to 10-formyltetrahydrofolate. The sequence is that of Bifunctional protein FolD from Shewanella sp. (strain ANA-3).